We begin with the raw amino-acid sequence, 392 residues long: MAKRDYYEVLGIDKSASENDIKKAYRKAAMKYHPDKFANASDAEKKDAEEKFKEINEAYQILSDSQKKQQYDQFGHAAFEQGGAGFGGGFNAGGFDFGDIFGDIFGGGGFGGFEGFSGFGGSSRRSYVEPGNDLRYNLEITLEEAAKGVEKTIKYKRTGKCENCHGTGGEDDKMKTCPTCNGQGTIRTQQRTILGVMQSQSVCPDCHGTGKVPEKKCKHCHGTGTAKETVEKKVNVPAGIDDGQKLKYAGLGEASQNGGPNGDLYVVIRIKSHDIFVRDGENLYCEVPISYSTAVLGGEVEIPTLNGKKMIKVPEGTESGKLLKVKGEGIKSLRGYGQGDIIVKITIETPKKLTDKQKELLQKFEESLNEKNYEQKSSFMKKVKKFFKDIID.

In terms of domain architecture, J spans 5 to 75 (DYYEVLGIDK…QKKQQYDQFG (71 aa)). The segment at 148–229 (GVEKTIKYKR…CHGTGTAKET (82 aa)) adopts a CR-type zinc-finger fold. The Zn(2+) site is built by Cys161, Cys164, Cys177, Cys180, Cys203, Cys206, Cys217, and Cys220. CXXCXGXG motif repeat units follow at residues 161–168 (CENCHGTG), 177–184 (CPTCNGQG), 203–210 (CPDCHGTG), and 217–224 (CKHCHGTG).

The protein belongs to the DnaJ family. Homodimer. It depends on Zn(2+) as a cofactor.

The protein resides in the cytoplasm. In terms of biological role, participates actively in the response to hyperosmotic and heat shock by preventing the aggregation of stress-denatured proteins and by disaggregating proteins, also in an autonomous, DnaK-independent fashion. Unfolded proteins bind initially to DnaJ; upon interaction with the DnaJ-bound protein, DnaK hydrolyzes its bound ATP, resulting in the formation of a stable complex. GrpE releases ADP from DnaK; ATP binding to DnaK triggers the release of the substrate protein, thus completing the reaction cycle. Several rounds of ATP-dependent interactions between DnaJ, DnaK and GrpE are required for fully efficient folding. Also involved, together with DnaK and GrpE, in the DNA replication of plasmids through activation of initiation proteins. The protein is Chaperone protein DnaJ of Fusobacterium nucleatum subsp. nucleatum (strain ATCC 25586 / DSM 15643 / BCRC 10681 / CIP 101130 / JCM 8532 / KCTC 2640 / LMG 13131 / VPI 4355).